The following is a 505-amino-acid chain: RNA-splicing ligase RtcB homolog (505 aa).

Mn(2+) contacts are provided by D119, C122, H227, H259, and H353. 226 to 230 contributes to the GMP binding site; sequence NHYAE. Residues 353–354, 402–405, S409, 428–431, and K504 each bind GMP; these read HN, GGTM, and HGAG. H428 acts as the GMP-histidine intermediate in catalysis.

Belongs to the RtcB family. In terms of assembly, catalytic component of the tRNA-splicing ligase complex. Requires Mn(2+) as cofactor.

The catalysed reaction is a 3'-end 3'-phospho-ribonucleotide-RNA + a 5'-end dephospho-ribonucleoside-RNA + GTP = a ribonucleotidyl-ribonucleotide-RNA + GMP + diphosphate. It carries out the reaction a 3'-end 2',3'-cyclophospho-ribonucleotide-RNA + a 5'-end dephospho-ribonucleoside-RNA + GTP + H2O = a ribonucleotidyl-ribonucleotide-RNA + GMP + diphosphate + H(+). Catalytic subunit of the tRNA-splicing ligase complex that acts by directly joining spliced tRNA halves to mature-sized tRNAs by incorporating the precursor-derived splice junction phosphate into the mature tRNA as a canonical 3',5'-phosphodiester. May act as an RNA ligase with broad substrate specificity, and may function toward other RNAs. The polypeptide is RNA-splicing ligase RtcB homolog (Nematostella vectensis (Starlet sea anemone)).